The primary structure comprises 302 residues: Putative peptide permease protein BOV_A0350 (302 aa).

Residues 1–22 form a disordered region; the sequence is MRSSIHASRLRKMGQSIPASTG. A run of 6 helical transmembrane segments spans residues 38 to 58, 101 to 121, 147 to 167, 200 to 222, 230 to 250, and 268 to 288; these read IFGLVLLTPLLFAVLTYPLWL, LLVAVSSVVLSTAIGFLIGAI, IFLLVLASIIGSGIWSTVVVI, AGLGHLLFRHGLPNSIDILVVYA, ILLEAGLSFLGLGVPPPAASW, and WQWLFPGGALVLAVLAINFIG. The region spanning 97-288 is the ABC transmembrane type-1 domain; it reads GRISLLVAVS…LAVLAINFIG (192 aa).

The protein belongs to the binding-protein-dependent transport system permease family. The complex is composed of two ATP-binding proteins (BOV_A0347 and BOV_A0348), two transmembrane proteins (BOV_A0350 and BOV_A0351) and a solute-binding protein (BOV_A0352).

It localises to the cell inner membrane. Probably part of an ABC transporter complex that could be involved in peptide import. Probably responsible for the translocation of the substrate across the membrane. This is Putative peptide permease protein BOV_A0350 from Brucella ovis (strain ATCC 25840 / 63/290 / NCTC 10512).